A 251-amino-acid polypeptide reads, in one-letter code: GTP cyclohydrolase 1 type 2 homolog (251 aa).

Positions 63, 64, 101, 219, and 223 each coordinate a divalent metal cation.

It belongs to the GTP cyclohydrolase I type 2/NIF3 family. As to quaternary structure, toroid-shaped homohexamer. In the hexamer, 3 dimers assemble to form a ring-like structure surrounding a central hole.

The sequence is that of GTP cyclohydrolase 1 type 2 homolog from Haemophilus influenzae (strain ATCC 51907 / DSM 11121 / KW20 / Rd).